The sequence spans 189 residues: Ribosome hibernation promotion factor (189 aa).

Belongs to the HPF/YfiA ribosome-associated protein family. Long HPF subfamily. Interacts with 100S ribosomes.

The protein resides in the cytoplasm. In terms of biological role, required for dimerization of active 70S ribosomes into 100S ribosomes in stationary phase; 100S ribosomes are translationally inactive and sometimes present during exponential growth. The chain is Ribosome hibernation promotion factor from Staphylococcus epidermidis (strain ATCC 35984 / DSM 28319 / BCRC 17069 / CCUG 31568 / BM 3577 / RP62A).